Reading from the N-terminus, the 430-residue chain is Serine hydroxymethyltransferase 2 (430 aa).

(6S)-5,6,7,8-tetrahydrofolate contacts are provided by residues leucine 128 and glycine 132–leucine 134. Position 237 is an N6-(pyridoxal phosphate)lysine (lysine 237).

Belongs to the SHMT family. Homodimer. Requires pyridoxal 5'-phosphate as cofactor.

The protein localises to the cytoplasm. The catalysed reaction is (6R)-5,10-methylene-5,6,7,8-tetrahydrofolate + glycine + H2O = (6S)-5,6,7,8-tetrahydrofolate + L-serine. Its pathway is one-carbon metabolism; tetrahydrofolate interconversion. The protein operates within amino-acid biosynthesis; glycine biosynthesis; glycine from L-serine: step 1/1. Its function is as follows. Catalyzes the reversible interconversion of serine and glycine with tetrahydrofolate (THF) serving as the one-carbon carrier. This reaction serves as the major source of one-carbon groups required for the biosynthesis of purines, thymidylate, methionine, and other important biomolecules. Also exhibits THF-independent aldolase activity toward beta-hydroxyamino acids, producing glycine and aldehydes, via a retro-aldol mechanism. This Rhodospirillum rubrum (strain ATCC 11170 / ATH 1.1.1 / DSM 467 / LMG 4362 / NCIMB 8255 / S1) protein is Serine hydroxymethyltransferase 2.